Reading from the N-terminus, the 137-residue chain is Proofreading thioesterase EntH (137 aa).

The Nucleophile or proton acceptor role is filled by E63.

This sequence belongs to the thioesterase PaaI family. Homotetramer. Dimer of dimers. Interacts specifically with the aryl carrier protein (ArCP) domain of EntB.

The protein resides in the cytoplasm. Its pathway is siderophore biosynthesis; enterobactin biosynthesis. Functionally, required for optimal enterobactin synthesis. Acts as a proofreading enzyme that prevents EntB misacylation by hydrolyzing the thioester bound existing between EntB and wrongly charged molecules. This Cronobacter turicensis (strain DSM 18703 / CCUG 55852 / LMG 23827 / z3032) protein is Proofreading thioesterase EntH.